Here is a 92-residue protein sequence, read N- to C-terminus: Phospholemman (92 aa).

An N-terminal signal peptide occupies residues Met-1–Ala-20. Residues Glu-21–Ser-35 lie on the Extracellular side of the membrane. A helical transmembrane segment spans residues Leu-36–Leu-56. Over Ser-57–Arg-92 the chain is Cytoplasmic. Cys-60 carries S-palmitoyl cysteine lipidation. Position 62 is an S-glutathionyl cysteine; alternate (Cys-62). Cys-62 carries the S-palmitoyl cysteine; alternate lipid modification. Positions Asn-65–Arg-92 are disordered. The residue at position 79 (Thr-79) is a Phosphothreonine. Position 82 is a phosphoserine (Ser-82). Residues Ser-83 and Ser-88 each carry the phosphoserine; by PKA and PKC modification. Over residues Ser-83–Arg-92 the composition is skewed to basic residues. Thr-89 carries the phosphothreonine; by PKC modification.

Belongs to the FXYD family. In terms of assembly, homotetramer. Monomer. Regulatory subunit of the sodium/potassium-transporting ATPase (NKA) which is composed of a catalytic alpha subunit, a non-catalytic beta subunit and an additional regulatory subunit. The monomeric form associates with NKA while the oligomeric form does not. Interacts with the catalytic alpha-1 subunit ATP1A1. Also interacts with the catalytic alpha-2 and alpha-3 subunits ATP1A2 and ATP1A3. Very little interaction with the alpha subunits ATP1A1, ATP1A2 or ATP1A3 when phosphorylated at Ser-83. Interacts with non-catalytic beta-1 subunit ATP1B1. Oxidative stress decreases interaction with ATP1A1 but increases interaction with ATP1B1. Post-translationally, major plasma membrane substrate for cAMP-dependent protein kinase (PKA) and protein kinase C (PKC) in several different tissues. Phosphorylated in response to insulin and adrenergic stimulation. Phosphorylation at Ser-88 stimulates sodium/potassium-transporting ATPase activity while the unphosphorylated form inhibits sodium/potassium-transporting ATPase activity. Phosphorylation increases tetramerization, decreases binding to ATP1A1 and reduces inhibition of ATP1A1 activity. Phosphorylation at Ser-83 leads to greatly reduced interaction with ATP1A1, ATP1A2 and ATP1A3. May be phosphorylated by DMPK. In terms of processing, palmitoylation increases half-life and stability and is enhanced upon phosphorylation at Ser-88 by PKA. Present in heart, esophagus, stomach, aorta, skeletal muscle, smooth muscle, and liver but absent from brain and kidney.

The protein resides in the cell membrane. Its subcellular location is the sarcolemma. It localises to the apical cell membrane. It is found in the membrane. The protein localises to the caveola. The protein resides in the T-tubule. In terms of biological role, associates with and regulates the activity of the sodium/potassium-transporting ATPase (NKA) which transports Na(+) out of the cell and K(+) into the cell. Inhibits NKA activity in its unphosphorylated state and stimulates activity when phosphorylated. Reduces glutathionylation of the NKA beta-1 subunit ATP1B1, thus reversing glutathionylation-mediated inhibition of ATP1B1. Contributes to female sexual development by maintaining the excitability of neurons which secrete gonadotropin-releasing hormone. The chain is Phospholemman from Canis lupus familiaris (Dog).